Consider the following 282-residue polypeptide: Pantothenate synthetase (282 aa).

32–39 contacts ATP; sequence MGALHEGH. Histidine 39 (proton donor) is an active-site residue. Residue glutamine 63 coordinates (R)-pantoate. Glutamine 63 contacts beta-alanine. 149–152 is an ATP binding site; sequence GEKD. (R)-pantoate is bound at residue glutamine 155. ATP is bound by residues valine 178 and 186-189; that span reads LSSR.

Belongs to the pantothenate synthetase family. In terms of assembly, homodimer.

The protein localises to the cytoplasm. It catalyses the reaction (R)-pantoate + beta-alanine + ATP = (R)-pantothenate + AMP + diphosphate + H(+). Its pathway is cofactor biosynthesis; (R)-pantothenate biosynthesis; (R)-pantothenate from (R)-pantoate and beta-alanine: step 1/1. Its function is as follows. Catalyzes the condensation of pantoate with beta-alanine in an ATP-dependent reaction via a pantoyl-adenylate intermediate. The chain is Pantothenate synthetase from Paracoccus denitrificans (strain Pd 1222).